The sequence spans 498 residues: uncharacterized protein (498 aa).

3 disordered regions span residues 1-48, 99-134, and 190-209; these read MSND…ARPK, NDLH…GNSK, and NSEN…TSSN. The span at 35–44 shows a compositional bias: polar residues; that stretch reads ELSTPKQVNQ. Positions 99–110 are enriched in basic and acidic residues; that stretch reads NDLHPLDNDSTR. Residues 111 to 126 show a composition bias toward polar residues; sequence TSKTLKNSSEVLTASK.

This is an uncharacterized protein from Schizosaccharomyces pombe (strain 972 / ATCC 24843) (Fission yeast).